The primary structure comprises 214 residues: Ribosomal RNA large subunit methyltransferase E (214 aa).

Residues Gly68, Trp70, Asp88, Asp104, and Asp129 each coordinate S-adenosyl-L-methionine. Lys169 functions as the Proton acceptor in the catalytic mechanism.

It belongs to the class I-like SAM-binding methyltransferase superfamily. RNA methyltransferase RlmE family.

It is found in the cytoplasm. The enzyme catalyses uridine(2552) in 23S rRNA + S-adenosyl-L-methionine = 2'-O-methyluridine(2552) in 23S rRNA + S-adenosyl-L-homocysteine + H(+). In terms of biological role, specifically methylates the uridine in position 2552 of 23S rRNA at the 2'-O position of the ribose in the fully assembled 50S ribosomal subunit. The protein is Ribosomal RNA large subunit methyltransferase E of Magnetococcus marinus (strain ATCC BAA-1437 / JCM 17883 / MC-1).